The chain runs to 200 residues: Inner membrane protein E199L (200 aa).

Residue Asn-131 is glycosylated (N-linked (GlcNAc...) asparagine; by host). Residues 150–170 (INVMNHPFLTLILIILILIII) form a helical membrane-spanning segment.

It belongs to the asfivirus E199L family. As to quaternary structure, interacts with host PYCR2; this interaction results in autophagy activation. In terms of processing, contains intramolecular disulfide bonds.

It localises to the virion membrane. It is found in the host membrane. Essential for viral fusion with host endosomal membrane and core release. Not required for virus morphogenesis and egress. Induces complete autophagy through the interaction with and down-regulation of host PYCR2. This is Inner membrane protein E199L from Ornithodoros (relapsing fever ticks).